Consider the following 224-residue polypeptide: MELYETSPYFYQEPRFYDGENYLPVHLQGFEPPGYERTELTLSPEAPGPLEDKGLGTPEHCPGQCLPWACKVCKRKSVSVDRRRAATLREKRRLKKVNEAFEALKRSTLLNPNQRLPKVEILRSAIQYIERLQALLSSLNQEERDLRYRGGGGPQPGVPSECSSHSASCSPEWGSALEFSANPGDHLLTADPTDAHNLHSLTSIVDSITVEDVSVAFPDETMPN.

Residues Ser-77 and Ser-79 each carry the phosphoserine; by CaMK2G modification. The region spanning 81-132 (DRRRAATLREKRRLKKVNEAFEALKRSTLLNPNQRLPKVEILRSAIQYIERL) is the bHLH domain. Thr-87 carries the post-translational modification Phosphothreonine; by CaMK2G.

As to quaternary structure, homodimer and heterodimer with E12; heterodimerization enhances MYOG DNA-binding and transcriptional activities. Interacts with SMARCA4/BRG1/BAF190A. Interacts (via C-terminal region) with SSRP1 and SUPT16H; the interaction is indicative of an interaction with the FACT complex. Interacts with CSRP3. Post-translationally, phosphorylated by CAMK2G on threonine and serine amino acids in a muscle activity-dependent manner. Phosphorylation of Thr-87 impairs both DNA-binding and trans-activation functions in contracting muscles.

Its subcellular location is the nucleus. In terms of biological role, acts as a transcriptional activator that promotes transcription of muscle-specific target genes and plays a role in muscle differentiation, cell cycle exit and muscle atrophy. Essential for the development of functional embryonic skeletal fiber muscle differentiation. However is dispensable for postnatal skeletal muscle growth; phosphorylation by CAMK2G inhibits its transcriptional activity in respons to muscle activity. Required for the recruitment of the FACT complex to muscle-specific promoter regions, thus promoting gene expression initiation. During terminal myoblast differentiation, plays a role as a strong activator of transcription at loci with an open chromatin structure previously initiated by MYOD1. Together with MYF5 and MYOD1, co-occupies muscle-specific gene promoter core regions during myogenesis. Also cooperates with myocyte-specific enhancer factor MEF2D and BRG1-dependent recruitment of SWI/SNF chromatin-remodeling enzymes to alter chromatin structure at myogenic late gene promoters. Facilitates cell cycle exit during terminal muscle differentiation through the up-regulation of miR-20a expression, which in turn represses genes involved in cell cycle progression. Binds to the E-box containing (E1) promoter region of the miR-20a gene. Also plays a role in preventing reversal of muscle cell differentiation. Contributes to the atrophy-related gene expression in adult denervated muscles. Induces fibroblasts to differentiate into myoblasts. The protein is Myogenin (MYOG) of Homo sapiens (Human).